A 124-amino-acid polypeptide reads, in one-letter code: Large ribosomal subunit protein bL12 (124 aa).

The protein belongs to the bacterial ribosomal protein bL12 family. In terms of assembly, homodimer. Part of the ribosomal stalk of the 50S ribosomal subunit. Forms a multimeric L10(L12)X complex, where L10 forms an elongated spine to which 2 to 4 L12 dimers bind in a sequential fashion. Binds GTP-bound translation factors.

In terms of biological role, forms part of the ribosomal stalk which helps the ribosome interact with GTP-bound translation factors. Is thus essential for accurate translation. This chain is Large ribosomal subunit protein bL12, found in Burkholderia mallei (strain NCTC 10247).